Consider the following 147-residue polypeptide: UPF0260 protein CJA_2436 (147 aa).

Belongs to the UPF0260 family.

In Cellvibrio japonicus (strain Ueda107) (Pseudomonas fluorescens subsp. cellulosa), this protein is UPF0260 protein CJA_2436.